An 819-amino-acid polypeptide reads, in one-letter code: Protein SCARECROW (819 aa).

4 disordered regions span residues 6–49 (LFNG…HSER), 65–136 (HNNN…INNN), 212–231 (SQNNQTNRTNNNSSNNRNNT), and 393–420 (PLSTQQDQQHQLQQHPEDLAPATTTTTT). A compositionally biased stretch (low complexity) spans 15 to 33 (TTPDETNNNSTSNSSNIST). Positions 79–98 (RTNNTSSLNCSLPATTQKGV) are enriched in polar residues. Residues 99–136 (TTTTTTTLASSGNNNNNNNNNNNYHYHNNNNNSIINNN) are compositionally biased toward low complexity. A coiled-coil region spans residues 418-448 (TTTSAELALARKKKEEIKEQKKKDEEGLHLL). In terms of domain architecture, GRAS spans 438-806 (KKKDEEGLHL…LCLLTASAWR (369 aa)). Positions 445–507 (LHLLTLLLQC…RLVSSCLGIY (63 aa)) are leucine repeat I (LRI). The LxCxE motif motif lies at 452–456 (LQCAE). A VHIID region spans residues 526-591 (FQVFNGISPF…GGPPYVRLTG (66 aa)). The VHIID signature appears at 557 to 561 (VHIID). Positions 601–633 (ATGKRLSDFANKLGLPFEFFPVAEKVGNIDVEK) are leucine repeat II (LRII). Positions 642 to 729 (VAVHWLQHSL…QQLLSREIRN (88 aa)) are PFYRE. Positions 732–806 (AVGGPSRSGE…LCLLTASAWR (75 aa)) are SAW.

The protein belongs to the GRAS family. As to expression, expressed in shoot apical meristem, leaf primordia, between the cortex and the differentiating vessels in lower shoots and in root endodermis.

It localises to the nucleus. Putative transcription factor involved in asymmetric cell division. The polypeptide is Protein SCARECROW (SCR) (Pisum sativum (Garden pea)).